The sequence spans 129 residues: Defensin-like protein 182 (129 aa).

A signal peptide spans 1 to 26 (METVTSLVFIVNLLIIFTSVVNQARG). 8 cysteine pairs are disulfide-bonded: C29-C70, C36-C55, C39-C64, C43-C66, C83-C129, C94-C114, C99-C123, and C103-C125.

The protein belongs to the DEFL family.

Its subcellular location is the secreted. Confers broad-spectrum resistance to pathogens. In Arabidopsis thaliana (Mouse-ear cress), this protein is Defensin-like protein 182 (PDF3.2).